The primary structure comprises 252 residues: 2-succinyl-6-hydroxy-2,4-cyclohexadiene-1-carboxylate synthase (252 aa).

Belongs to the AB hydrolase superfamily. MenH family. In terms of assembly, monomer.

The catalysed reaction is 5-enolpyruvoyl-6-hydroxy-2-succinyl-cyclohex-3-ene-1-carboxylate = (1R,6R)-6-hydroxy-2-succinyl-cyclohexa-2,4-diene-1-carboxylate + pyruvate. Its pathway is quinol/quinone metabolism; 1,4-dihydroxy-2-naphthoate biosynthesis; 1,4-dihydroxy-2-naphthoate from chorismate: step 3/7. It functions in the pathway quinol/quinone metabolism; menaquinone biosynthesis. Functionally, catalyzes a proton abstraction reaction that results in 2,5-elimination of pyruvate from 2-succinyl-5-enolpyruvyl-6-hydroxy-3-cyclohexene-1-carboxylate (SEPHCHC) and the formation of 2-succinyl-6-hydroxy-2,4-cyclohexadiene-1-carboxylate (SHCHC). The sequence is that of 2-succinyl-6-hydroxy-2,4-cyclohexadiene-1-carboxylate synthase from Escherichia coli (strain SMS-3-5 / SECEC).